We begin with the raw amino-acid sequence, 256 residues long: Pimeloyl-[acyl-carrier protein] methyl ester esterase (256 aa).

The region spanning 17–241 (VYLIHGWGAN…KAAHAPFLSH (225 aa)) is the AB hydrolase-1 domain. Substrate contacts are provided by residues W23, 83-84 (SL), and 145-149 (FLQLQ). The Nucleophile role is filled by S83. Residues D207 and H235 contribute to the active site. H235 lines the substrate pocket.

Belongs to the AB hydrolase superfamily. Carboxylesterase BioH family. As to quaternary structure, monomer.

Its subcellular location is the cytoplasm. The enzyme catalyses 6-carboxyhexanoyl-[ACP] methyl ester + H2O = 6-carboxyhexanoyl-[ACP] + methanol + H(+). Its pathway is cofactor biosynthesis; biotin biosynthesis. Its function is as follows. The physiological role of BioH is to remove the methyl group introduced by BioC when the pimeloyl moiety is complete. It allows to synthesize pimeloyl-ACP via the fatty acid synthetic pathway through the hydrolysis of the ester bonds of pimeloyl-ACP esters. In Neisseria meningitidis serogroup C / serotype 2a (strain ATCC 700532 / DSM 15464 / FAM18), this protein is Pimeloyl-[acyl-carrier protein] methyl ester esterase.